Consider the following 341-residue polypeptide: Phosphate acyltransferase (341 aa).

This sequence belongs to the PlsX family. Homodimer. Probably interacts with PlsY.

It localises to the cytoplasm. It catalyses the reaction a fatty acyl-[ACP] + phosphate = an acyl phosphate + holo-[ACP]. It participates in lipid metabolism; phospholipid metabolism. Functionally, catalyzes the reversible formation of acyl-phosphate (acyl-PO(4)) from acyl-[acyl-carrier-protein] (acyl-ACP). This enzyme utilizes acyl-ACP as fatty acyl donor, but not acyl-CoA. This chain is Phosphate acyltransferase, found in Aliivibrio salmonicida (strain LFI1238) (Vibrio salmonicida (strain LFI1238)).